The chain runs to 126 residues: Fluoride-specific ion channel FluC (126 aa).

The next 4 membrane-spanning stretches (helical) occupy residues 7–24 (LWVS…YFLS), 35–55 (FPWG…LFLV), 69–89 (LLIA…AYES), and 98–118 (WGLF…AVLG). Na(+)-binding residues include Gly77 and Thr80.

It belongs to the fluoride channel Fluc/FEX (TC 1.A.43) family.

The protein localises to the cell inner membrane. It catalyses the reaction fluoride(in) = fluoride(out). Its activity is regulated as follows. Na(+) is not transported, but it plays an essential structural role and its presence is essential for fluoride channel function. Its function is as follows. Fluoride-specific ion channel. Important for reducing fluoride concentration in the cell, thus reducing its toxicity. This is Fluoride-specific ion channel FluC from Koribacter versatilis (strain Ellin345).